The primary structure comprises 132 residues: Small ribosomal subunit protein uS19 (132 aa).

This sequence belongs to the universal ribosomal protein uS19 family. In terms of assembly, part of the 30S ribosomal subunit.

Protein S19 forms a complex with S13 that binds strongly to the 16S ribosomal RNA. This Pyrococcus furiosus (strain ATCC 43587 / DSM 3638 / JCM 8422 / Vc1) protein is Small ribosomal subunit protein uS19.